A 353-amino-acid chain; its full sequence is 2-oxoglutarate-dependent dioxygenase phqC (353 aa).

Positions 199–315 (CASELRLNNY…RRSCAFFLKA (117 aa)) constitute a Fe2OG dioxygenase domain. Fe cation-binding residues include His-227, Asp-229, and His-287. Arg-302 serves as a coordination point for 2-oxoglutarate.

It belongs to the iron/ascorbate-dependent oxidoreductase family. Fe(2+) serves as cofactor.

Its pathway is alkaloid biosynthesis. In terms of biological role, 2-oxoglutarate-dependent dioxygenase; part of the gene cluster that mediates the biosynthesis of paraherquamide, a fungal indole alkaloid that belongs to a family of natural products containing a characteristic bicyclo[2.2.2]diazaoctane core. The first steps in the biosynthesis of paraherquamide is the production of the beta-methyl-proline precursor from L-isoleucine. They require oxidation of a terminally hydroxylated L-isoleucine to the corresponding aldehyde by enzymes which have still to be identified. Spontaneous cyclization and dehydration would yield the 4-methyl pyrolline-5-carboxylic acid, which is then reduced by the pyrroline-5-carboxylate reductase phqD leading to the beta-methyl-proline precursor. The next step of paraherquamide biosynthesis involves coupling of beta-methyl-proline and L-tryptophan by the bimodular NRPS phqB, to produce a monooxopiperazine intermediate. The reductase (R) domain of phqB utilizes NADPH for hydride transfer to reduce the thioester bond of the T domain-tethered linear dipeptide to a hemithioaminal intermediate, which spontaneously cleaves the C-S bond to release the aldehyde product. This compound undergoes spontaneous cyclization and dehydration to give a dienamine which is reverse prenylated at C-2 by the reverse prenyltransferase phqJ. The other prenyltransferase present in the cluster, phqI may be a redundant gene in the pathway. During biosynthetic assembly, the key step to produce the polycyclic core is catalyzed by the bifunctional reductase and intramolecular [4+2] Diels-Alderase, phqE, resulting in formation of the [2.2.2] diazaoctane intermediate preparaherquamide. Following formation of preparaherquamide, an indole 2,3-epoxidation-initiated pinacol-like rearrangement is catalyzed by the phqK FAD-dependent monooxygenase. The prenyltransferase phqA, the cytochrome P450 monooxygenase phqL, and the FAD-linked oxidoreductase phqH (or the cytochrome P450 monooxygenase phqM), are proposed to be involved in the formation of the pyran ring. The FAD-dependent monooxygenase phqK is likely responsible for generation of the spiro-oxindole, and the N-methylation is likely mediated by the phqN methyltransferase leading to the isolable natural product paraherquamide F. However, the order of these biosynthetic steps has still to be determined. In late-stage paraherquamide biosynthesis, the third P450 monooxygenase, phqO, is probably responsible for the C-14 hydroxylation, transforming paraherquamide F to paraherquamide G, and paraherquamide E to the final product paraherquamide A. The expansion from the 6-membered ring pyran (in paraherquamides F and G) to the 7-membered dioxepin ring (in paraherquamides A and E) represents a poorly understood but intriguing process that probably involves the 2-oxoglutarate-dependent dioxygenase phqC. Finally, the remaining members of the paraherquamide cluster, including phqI as well as phqM (or phqH), do not have a clearly prescribed role and appear to be redundant. The chain is 2-oxoglutarate-dependent dioxygenase phqC from Penicillium fellutanum.